A 466-amino-acid chain; its full sequence is MTAAPLRLHPDRLFPADPDTRVVARRLYAEVAGLPIVSPHGHTDPRWFAEDAPFGDASSLLLQPDHYVFRMLYSQGVPLEAIGIGAPVDPRAAWRVLADHYHLFRGTPSRLWLDWVFHSVFGLDVRLAPETADLTFDSINEQLARPEFRPRALFDRFNIELLATTESPLDPLDHHAAIRASGWTGRVITAFRPDPVVDPDFEGFAANLDRLGAMTGEDVGSYAGYLAALRARRAAFAAAGATSTDHGHPTAATADLDRGEAERLYAQVRGGGATAEQAELFRAHMLTVMAEMSIDDGLVMQIHPGSFRNHNADLFRRFGRDKGADIPTRTDFVRALRPLLGRFGNDPRLSLILFTLDESAYARELAPLAGHYPALKLGPAWWFHDSPEGMRRFRRQTTETAGFHNLVGFNDDTRAFLSIPARHDVARRIDCGYLAELVVEHQLDEDEAADLAVDLTYRLVKSAYRL.

The protein belongs to the metallo-dependent hydrolases superfamily. Uronate isomerase family.

The catalysed reaction is D-glucuronate = D-fructuronate. It catalyses the reaction aldehydo-D-galacturonate = keto-D-tagaturonate. The protein operates within carbohydrate metabolism; pentose and glucuronate interconversion. This is Uronate isomerase from Rhizorhabdus wittichii (strain DSM 6014 / CCUG 31198 / JCM 15750 / NBRC 105917 / EY 4224 / RW1) (Sphingomonas wittichii).